Consider the following 248-residue polypeptide: Ribosomal RNA small subunit methyltransferase G (248 aa).

The interval 1–23 (MFHVKHVGPVEPAAGDPEVPPVA) is disordered. S-adenosyl-L-methionine contacts are provided by residues G93, L98, 143 to 144 (AE), and R161. Residues 226 to 248 (VVSARRAKPPHPKSARTGKAGTR) are disordered. Over residues 230–248 (RRAKPPHPKSARTGKAGTR) the composition is skewed to basic residues.

This sequence belongs to the methyltransferase superfamily. RNA methyltransferase RsmG family.

The protein resides in the cytoplasm. Specifically methylates the N7 position of guanine in position 518 of 16S rRNA. The sequence is that of Ribosomal RNA small subunit methyltransferase G from Mycolicibacterium paratuberculosis (strain ATCC BAA-968 / K-10) (Mycobacterium paratuberculosis).